We begin with the raw amino-acid sequence, 263 residues long: Hydroxyethylthiazole kinase (263 aa).

Position 39 (M39) interacts with substrate. Residues K115 and T160 each coordinate ATP. G187 contacts substrate.

The protein belongs to the Thz kinase family. It depends on Mg(2+) as a cofactor.

The enzyme catalyses 5-(2-hydroxyethyl)-4-methylthiazole + ATP = 4-methyl-5-(2-phosphooxyethyl)-thiazole + ADP + H(+). It participates in cofactor biosynthesis; thiamine diphosphate biosynthesis; 4-methyl-5-(2-phosphoethyl)-thiazole from 5-(2-hydroxyethyl)-4-methylthiazole: step 1/1. Its function is as follows. Catalyzes the phosphorylation of the hydroxyl group of 4-methyl-5-beta-hydroxyethylthiazole (THZ). The sequence is that of Hydroxyethylthiazole kinase from Staphylococcus saprophyticus subsp. saprophyticus (strain ATCC 15305 / DSM 20229 / NCIMB 8711 / NCTC 7292 / S-41).